Here is a 665-residue protein sequence, read N- to C-terminus: Pentatricopeptide repeat-containing protein At1g04840 (665 aa).

11 PPR repeats span residues asparagine 90–proline 124, aspartate 125–asparagine 155, aspartate 160–arginine 190, serine 195–serine 229, tryptophan 230–lysine 256, asparagine 257–proline 291, asparagine 292–leucine 326, aspartate 327–lysine 357, aspartate 358–proline 392, aspartate 393–aspartate 423, and threonine 429–asparagine 459. Residues threonine 464–aspartate 539 are type E motif. The tract at residues glycine 540–isoleucine 570 is type E(+) motif. The tract at residues glutamine 571–tryptophan 665 is type DYW motif.

This sequence belongs to the PPR family. PCMP-H subfamily.

The chain is Pentatricopeptide repeat-containing protein At1g04840 (PCMP-H64) from Arabidopsis thaliana (Mouse-ear cress).